The following is a 388-amino-acid chain: MKALRSSSRLSRWREWAAPLWVGCNFSAWMRLLIRNRFAVHHSRWHFAVLYTFLSMVNSCLGLWQKIVFGRRVAETVIADPPIFIVGHWRTGTTLLHELLVVDDRHTGPTGYECLAPHHFLLTEWFAPYVEFLVSKHRAMDNMDLSLHHPQEDEFVWCMQGLPSPYLTIAFPNRPPQYEEYLDLEQVAPRELEIWKRTLFRFVQQVYFRRRKTVILKNPTHSFRIKVLLEVFPQAKFIHIVRDPYVVYPSTIHLHKALYRIHGLQQPTFDGLDDKVVSTYVDLYRKLDEGRELVDPTRFYELRYEDLIGDPEGQLRRLYQHLGLGDFECYLPRLRQYLADHADYKTNSYQLTVEQRAIVDEHWGEIIDRYGYDRHTPEPARLRPAVGG.

The protein belongs to the Stf3 family.

It carries out the reaction omega-hydroxy-beta-dihydromenaquinone-9 + 3'-phosphoadenylyl sulfate = omega-sulfo-beta-dihydromenaquinone-9 + adenosine 3',5'-bisphosphate + H(+). Its function is as follows. Involved in the biosynthesis of sulfomenaquinone (SMK, initially named S881 on the basis of its mass), which is localized in the outer envelope of M.bovis and negatively regulates its virulence. Catalyzes the transfer of a sulfonate group from 3'-phosphoadenosine-5'-phosphosulfate (PAPS) to omega-hydroxy-beta-dihydromenaquinone-9, generating omega-sulfo-beta-dihydromenaquinone-9 (sulfomenaquinone). This is Omega-hydroxy-beta-dihydromenaquinone-9 sulfotransferase Stf3 from Mycobacterium bovis (strain ATCC BAA-935 / AF2122/97).